A 235-amino-acid polypeptide reads, in one-letter code: Large ribosomal subunit protein uL1 (235 aa).

It belongs to the universal ribosomal protein uL1 family. As to quaternary structure, part of the 50S ribosomal subunit.

Its function is as follows. Binds directly to 23S rRNA. The L1 stalk is quite mobile in the ribosome, and is involved in E site tRNA release. Functionally, protein L1 is also a translational repressor protein, it controls the translation of the L11 operon by binding to its mRNA. The protein is Large ribosomal subunit protein uL1 of Mycobacteroides abscessus (strain ATCC 19977 / DSM 44196 / CCUG 20993 / CIP 104536 / JCM 13569 / NCTC 13031 / TMC 1543 / L948) (Mycobacterium abscessus).